A 59-amino-acid polypeptide reads, in one-letter code: Temperature acclimation protein A (59 aa).

A CSD domain is found at F1 to V55.

The protein resides in the cytoplasm. Functionally, affects cell viability at low temperatures. The polypeptide is Temperature acclimation protein A (tapA) (Pseudomonas fragi).